The chain runs to 875 residues: METTTITSILDDNNNNNNNNNNNNNNNNNNNNNNNNNNNNNNNNNYNYKEWDNEMVCKWLHDTKRIQKVSIEIFKANEITGNYLESLTDKMLLKMGLTIRDLLSFRSEFDDLKNIFNETNLYNNIQKNSIDYSIDNNNLNNLNNNNNNNNNNNNNNNNNNNNNNNNNNKTIKAPTIDISQYVFIKQMKGSVNCSLEKYINKKTKERILIKRIGKSNINEETIINEISILCSIDHPNIIKTYGYYKDENYYYVASKFYPKGSIKTKSKSTPYNEINAKKVFGKVLKAIDYLHSLDPPIIHRDINSDNILFDENDEPILIDFGLSYKELKDDNNNDDDNYDNHNHNHNHNHNHNHDNDNDNDTNVKIKTQCMEPRWPSPEIHREPPHFSKESDIFSFGCTLFEILGYIITTPIIILPSIPSGMSLECQILFNETTKIDSCFRPTSKQLLNFSWFKETALLTSSEPQPLEPQPQPKPQTSQSKPKPSSSLSSSELPPQPPLESQSKPKPSQSKTQPTQPQSKLNPSSPPSSSSSSLSEPPKPQPSQSKPKPSSSLSSEPPPLEPQPKPQTSQSKPKPSSSLSSSEPPPLEPQPTQSSKPQPSQSKPQPIQSQPTQPQPTQPKSSKQQPQSKQQQQQQQQQQQQQQQQQQQQQQQQKSKPEQSKSKPEQSQSKPQPGQPLQSPSKPQPIPSTTKTTTTTTTTTTPNNNNNNNNNNNNNNNNNNNNIITSINLIECFKKNNSKIIISKDMEFDNPYEKTLHEKHLLKLGISDCKQININHKYFKKVLSFLNSHLTSALQMKMGPYQVDIAPEFDNIFKTLFISLVLEKIDKDTLLKGGKDLGDTSSTLILYTFYYFLSNTLIYQIILHKPTSFKLVGKLK.

Over residues 1–12 (METTTITSILDD) the composition is skewed to polar residues. Residues 1–47 (METTTITSILDDNNNNNNNNNNNNNNNNNNNNNNNNNNNNNNNNNYN) form a disordered region. Residues 13 to 45 (NNNNNNNNNNNNNNNNNNNNNNNNNNNNNNNNN) are compositionally biased toward low complexity. One can recognise an SAM domain in the interval 51-116 (WDNEMVCKWL…SEFDDLKNIF (66 aa)). Residues 135–162 (DNNNLNNLNNNNNNNNNNNNNNNNNNNN) are a coiled coil. Residues 136-168 (NNNLNNLNNNNNNNNNNNNNNNNNNNNNNNNNN) show a composition bias toward low complexity. The segment at 136–170 (NNNLNNLNNNNNNNNNNNNNNNNNNNNNNNNNNKT) is disordered. Residues 181–452 (YVFIKQMKGS…SKQLLNFSWF (272 aa)) form the Protein kinase domain. ATP is bound by residues 187–195 (MKGSVNCSL) and Lys210. Residue Asp301 is the Proton acceptor of the active site. Disordered stretches follow at residues 331-362 (NNND…NDTN) and 461-718 (SEPQ…NNNN). Positions 474–554 (PQTSQSKPKP…KPKPSSSLSS (81 aa)) are enriched in low complexity. Over residues 555-564 (EPPPLEPQPK) the composition is skewed to pro residues. 3 stretches are compositionally biased toward low complexity: residues 565 to 581 (PQTS…LSSS), 589 to 611 (QPTQ…SQPT), and 617 to 653 (QPKS…QQQK). A coiled-coil region spans residues 626-655 (QSKQQQQQQQQQQQQQQQQQQQQQQQQKSK). A compositionally biased stretch (basic and acidic residues) spans 654-663 (SKPEQSKSKP). Low complexity predominate over residues 664-718 (EQSQSKPQPGQPLQSPSKPQPIPSTTKTTTTTTTTTTPNNNNNNNNNNNNNNNNN). Residues 842–862 (TLILYTFYYFLSNTLIYQIIL) traverse the membrane as a helical segment.

Belongs to the protein kinase superfamily. Ser/Thr protein kinase family.

Its subcellular location is the membrane. The enzyme catalyses L-seryl-[protein] + ATP = O-phospho-L-seryl-[protein] + ADP + H(+). It catalyses the reaction L-threonyl-[protein] + ATP = O-phospho-L-threonyl-[protein] + ADP + H(+). The protein is Probable serine/threonine-protein kinase samkC (samkC) of Dictyostelium discoideum (Social amoeba).